A 108-amino-acid polypeptide reads, in one-letter code: Integration host factor subunit alpha (108 aa).

The protein belongs to the bacterial histone-like protein family. As to quaternary structure, heterodimer of an alpha and a beta chain.

This protein is one of the two subunits of integration host factor, a specific DNA-binding protein that functions in genetic recombination as well as in transcriptional and translational control. The sequence is that of Integration host factor subunit alpha from Methylorubrum extorquens (strain CM4 / NCIMB 13688) (Methylobacterium extorquens).